The chain runs to 145 residues: Small ribosomal subunit protein eS19 (145 aa).

The protein belongs to the eukaryotic ribosomal protein eS19 family. As to quaternary structure, component of the small ribosomal subunit.

It localises to the cytoplasm. Its subcellular location is the nucleus. Component of the small ribosomal subunit. The ribosome is a large ribonucleoprotein complex responsible for the synthesis of proteins in the cell. Required for pre-rRNA processing and maturation of 40S ribosomal subunits. This chain is Small ribosomal subunit protein eS19 (rps19), found in Myxine glutinosa (Atlantic hagfish).